A 364-amino-acid chain; its full sequence is Chorismate synthase (364 aa).

Residues 41–60 (MQHDLDRRRPGTSRYTTARR) form a disordered region. Residues Arg48 and Arg54 each coordinate NADP(+). FMN-binding positions include 125–127 (RSS), 238–239 (NA), Gly278, 293–297 (KPTSS), and Arg319.

Belongs to the chorismate synthase family. In terms of assembly, homotetramer. Requires FMNH2 as cofactor.

It carries out the reaction 5-O-(1-carboxyvinyl)-3-phosphoshikimate = chorismate + phosphate. The protein operates within metabolic intermediate biosynthesis; chorismate biosynthesis; chorismate from D-erythrose 4-phosphate and phosphoenolpyruvate: step 7/7. Catalyzes the anti-1,4-elimination of the C-3 phosphate and the C-6 proR hydrogen from 5-enolpyruvylshikimate-3-phosphate (EPSP) to yield chorismate, which is the branch point compound that serves as the starting substrate for the three terminal pathways of aromatic amino acid biosynthesis. This reaction introduces a second double bond into the aromatic ring system. This chain is Chorismate synthase, found in Shewanella putrefaciens (strain CN-32 / ATCC BAA-453).